Reading from the N-terminus, the 845-residue chain is Protein P (845 aa).

Residues 1-179 (MPLSYQHFRK…FCGSPYSWEQ (179 aa)) are terminal protein domain (TP). Residues 180-348 (ELQHGRLVIK…YCLSHLVNLR (169 aa)) form a spacer region. The interval 226-252 (GLQPRQGRLASSQPSRSGSIRAKAHPS) is disordered. Residues 234–243 (LASSQPSRSG) are compositionally biased toward polar residues. Residues 349-692 (EDWGPCDEHG…YMNLYPVARQ (344 aa)) form a polymerase/reverse transcriptase domain (RT) region. The region spanning 359–602 (EHHIRIPRTP…YSLNFMGYII (244 aa)) is the Reverse transcriptase domain. Positions 431, 553, and 554 each coordinate Mg(2+). The interval 693 to 845 (RPGLCQVFAD…SPLHVAWRPP (153 aa)) is rnaseH domain (RH).

This sequence belongs to the hepadnaviridae P protein family.

It catalyses the reaction DNA(n) + a 2'-deoxyribonucleoside 5'-triphosphate = DNA(n+1) + diphosphate. The enzyme catalyses Endonucleolytic cleavage to 5'-phosphomonoester.. Its activity is regulated as follows. Activated by host HSP70 and HSP40 in vitro to be able to bind the epsilon loop of the pgRNA. Because deletion of the RNase H region renders the protein partly chaperone-independent, the chaperones may be needed indirectly to relieve occlusion of the RNA-binding site by this domain. Inhibited by several reverse-transcriptase inhibitors: Lamivudine, Adefovir and Entecavir. In terms of biological role, multifunctional enzyme that converts the viral RNA genome into dsDNA in viral cytoplasmic capsids. This enzyme displays a DNA polymerase activity that can copy either DNA or RNA templates, and a ribonuclease H (RNase H) activity that cleaves the RNA strand of RNA-DNA heteroduplexes in a partially processive 3'- to 5'-endonucleasic mode. Neo-synthesized pregenomic RNA (pgRNA) are encapsidated together with the P protein, and reverse-transcribed inside the nucleocapsid. Initiation of reverse-transcription occurs first by binding the epsilon loop on the pgRNA genome, and is initiated by protein priming, thereby the 5'-end of (-)DNA is covalently linked to P protein. Partial (+)DNA is synthesized from the (-)DNA template and generates the relaxed circular DNA (RC-DNA) genome. After budding and infection, the RC-DNA migrates in the nucleus, and is converted into a plasmid-like covalently closed circular DNA (cccDNA). The activity of P protein does not seem to be necessary for cccDNA generation, and is presumably released from (+)DNA by host nuclear DNA repair machinery. The sequence is that of Protein P from Homo sapiens (Human).